The following is a 463-amino-acid chain: Dihydrolipoyllysine-residue succinyltransferase component of 2-oxoglutarate dehydrogenase complex, mitochondrial (463 aa).

One can recognise a Lipoyl-binding domain in the interval 73-148 (STSIEVPPMA…TVGEELAQVE (76 aa)). An N6-lipoyllysine modification is found at K114. The segment at 144-237 (LAQVEPGEAP…FTPFPRTETR (94 aa)) is disordered. A compositionally biased stretch (low complexity) spans 148-157 (EPGEAPAEGS). Residues 184–212 (TASKKEAAPKKEAAPKKEVTEPKKADQPK) are compositionally biased toward basic and acidic residues. 3 tandem repeats follow at residues 185 to 190 (ASKKEA), 191 to 196 (APKKEA), and 197 to 202 (APKKEV). Residues 185-209 (ASKKEAAPKKEAAPKKEVTEPKKAD) are 4 X 6 AA approximate tandem repeats of A-[SP]-K-K-E-[AV]. The 4; approximate repeat unit spans residues 204 to 209 (EPKKAD). A Phosphothreonine modification is found at T340. Residues H435 and D439 contribute to the active site.

It belongs to the 2-oxoacid dehydrogenase family. As to quaternary structure, component of the 2-oxoglutarate dehydrogenase complex (OGDC), also called alpha-ketoglutarate dehydrogenase (KGDH) complex. The copmplex is composed of the catalytic subunits OGDH (2-oxoglutarate dehydrogenase KGD1; also called E1 subunit), DLST (dihydrolipoamide succinyltransferase KGD2; also called E2 subunit) and DLD (dihydrolipoamide dehydrogenase LPD1; also called E3 subunit), and the assembly factor KGD4. Requires (R)-lipoate as cofactor.

Its subcellular location is the mitochondrion. The enzyme catalyses N(6)-[(R)-dihydrolipoyl]-L-lysyl-[protein] + succinyl-CoA = N(6)-[(R)-S(8)-succinyldihydrolipoyl]-L-lysyl-[protein] + CoA. The protein operates within amino-acid degradation; L-lysine degradation via saccharopine pathway; glutaryl-CoA from L-lysine: step 6/6. Functionally, the 2-oxoglutarate dehydrogenase complex catalyzes the overall conversion of 2-oxoglutarate to succinyl-CoA and CO(2). It contains multiple copies of three enzymatic components: 2-oxoglutarate dehydrogenase (E1), dihydrolipoamide succinyltransferase (E2) and lipoamide dehydrogenase (E3). The chain is Dihydrolipoyllysine-residue succinyltransferase component of 2-oxoglutarate dehydrogenase complex, mitochondrial (KGD2) from Saccharomyces cerevisiae (strain ATCC 204508 / S288c) (Baker's yeast).